The chain runs to 61 residues: Metallothionein-2A (61 aa).

Met1 is subject to N-acetylmethionine. Positions 1–29 (MDPNCSCAAGGSCTCAGSCKCKDCKCTSC) are beta. Residues Cys5, Cys7, Cys13, Cys15, Cys19, Cys21, Cys24, Cys26, Cys29, Cys33, Cys34, Cys36, Cys37, Cys41, Cys44, Cys48, Cys50, and Cys57 each contribute to the a divalent metal cation site. The alpha stretch occupies residues 30-61 (KKSCCSCCPVGCAKCAQGCICKGASDKCSCCA). Ser58 carries the phosphoserine modification. Cys59 and Cys60 together coordinate a divalent metal cation.

This sequence belongs to the metallothionein superfamily. Type 1 family. As to quaternary structure, interacts with EOLA1.

Functionally, metallothioneins have a high content of cysteine residues that bind various heavy metals; these proteins are transcriptionally regulated by both heavy metals and glucocorticoids. This is Metallothionein-2A (MT2A) from Sus scrofa (Pig).